The primary structure comprises 245 residues: Ubiquinone/menaquinone biosynthesis C-methyltransferase UbiE (245 aa).

S-adenosyl-L-methionine is bound by residues Thr71, Asp92, and 118–119 (DA).

The protein belongs to the class I-like SAM-binding methyltransferase superfamily. MenG/UbiE family.

The catalysed reaction is a 2-demethylmenaquinol + S-adenosyl-L-methionine = a menaquinol + S-adenosyl-L-homocysteine + H(+). It catalyses the reaction a 2-methoxy-6-(all-trans-polyprenyl)benzene-1,4-diol + S-adenosyl-L-methionine = a 5-methoxy-2-methyl-3-(all-trans-polyprenyl)benzene-1,4-diol + S-adenosyl-L-homocysteine + H(+). It participates in quinol/quinone metabolism; menaquinone biosynthesis; menaquinol from 1,4-dihydroxy-2-naphthoate: step 2/2. Its pathway is cofactor biosynthesis; ubiquinone biosynthesis. Functionally, methyltransferase required for the conversion of demethylmenaquinol (DMKH2) to menaquinol (MKH2) and the conversion of 2-polyprenyl-6-methoxy-1,4-benzoquinol (DDMQH2) to 2-polyprenyl-3-methyl-6-methoxy-1,4-benzoquinol (DMQH2). In Neisseria meningitidis serogroup A / serotype 4A (strain DSM 15465 / Z2491), this protein is Ubiquinone/menaquinone biosynthesis C-methyltransferase UbiE.